Consider the following 441-residue polypeptide: Ribosomal protein uS12 methylthiotransferase RimO (441 aa).

Residues 7–117 (PKISFVSLGC…VLEAVHRAKP (111 aa)) enclose the MTTase N-terminal domain. The [4Fe-4S] cluster site is built by cysteine 16, cysteine 52, cysteine 81, cysteine 148, cysteine 152, and cysteine 155. Positions 134 to 371 (LTPRHYAYLK…MARQQVISAR (238 aa)) constitute a Radical SAM core domain. Positions 374-440 (KRKVGTRQQI…AYDLHGTVAG (67 aa)) constitute a TRAM domain.

It belongs to the methylthiotransferase family. RimO subfamily. The cofactor is [4Fe-4S] cluster.

It localises to the cytoplasm. The catalysed reaction is L-aspartate(89)-[ribosomal protein uS12]-hydrogen + (sulfur carrier)-SH + AH2 + 2 S-adenosyl-L-methionine = 3-methylsulfanyl-L-aspartate(89)-[ribosomal protein uS12]-hydrogen + (sulfur carrier)-H + 5'-deoxyadenosine + L-methionine + A + S-adenosyl-L-homocysteine + 2 H(+). In terms of biological role, catalyzes the methylthiolation of an aspartic acid residue of ribosomal protein uS12. This chain is Ribosomal protein uS12 methylthiotransferase RimO, found in Rhodopseudomonas palustris (strain BisB5).